The chain runs to 319 residues: Protein-methionine methyltransferase laeA (319 aa).

The disordered stretch occupies residues 269–293 (REPQSGTCSVQRENGANGDRSTLSA). Residues 270-293 (EPQSGTCSVQRENGANGDRSTLSA) show a composition bias toward polar residues.

This sequence belongs to the methyltransferase superfamily. LaeA methyltransferase family. As to quaternary structure, component of the heterotrimeric velvet complex composed of laeA, veA and velB; VeA acting as a bridging protein between laeA and velB.

The protein resides in the nucleus. The enzyme catalyses L-methionyl-[protein] + S-adenosyl-L-methionine = S-methyl-L-methionyl-[protein] + S-adenosyl-L-homocysteine. Methyltransferase; component of the velvet transcription factor complex that acts as a global regulator for secondary metabolite gene expression. Controls the expression of the chaetoglobosin A biosynthesis cluster via the cheR transcription factor and the subsequent production of chaetoglobosin A. Positively regulates the expression of smtA and negatively regulates the expression of velB. LaeA also regulates pigmentation and spores production. This chain is Protein-methionine methyltransferase laeA, found in Chaetomium globosum (strain ATCC 6205 / CBS 148.51 / DSM 1962 / NBRC 6347 / NRRL 1970) (Soil fungus).